A 323-amino-acid chain; its full sequence is Formyl peptide receptor-related sequence 4 (323 aa).

At 1 to 29 (MEVNISMPLNGSEVVFYDSTTSRVLWILS) the chain is on the extracellular side. Residues N4 and N10 are each glycosylated (N-linked (GlcNAc...) asparagine). The helical transmembrane segment at 30–50 (LVVLFITFVLGVLGNGLVIWV) threads the bilayer. The Cytoplasmic segment spans residues 51–66 (AGFQMAHTVTTVSYLN). A helical membrane pass occupies residues 67–87 (LALSDLSFMATLPLHIISMVM). Over 88 to 99 (RGKWLFGWFLCK) the chain is Extracellular. A disulfide bridge links C98 with C176. The chain crosses the membrane as a helical span at residues 100–120 (LVHIIANINLFVSIFLITLIA). Over 121–144 (MDRCICVLCPVWSQNHRTVSLARK) the chain is Cytoplasmic. The helical transmembrane segment at 145–165 (VVLGAWIFALLLTLPHFLFLT) threads the bilayer. Residues 166 to 202 (TVRDARGDVYCISKFESWVATSEEQLKVSVIAATASG) are Extracellular-facing. Residues 203–223 (IINFIIGFSMPMSFIAICYGL) form a helical membrane-spanning segment. At 224 to 241 (MAAKICRRGFVNSSRPLR) the chain is on the cytoplasmic side. The chain crosses the membrane as a helical span at residues 242–262 (VLTAVAVSFFVCWFPFQLIML). Over 263-280 (LGNIFNNETLSIIHMLVN) the chain is Extracellular. N-linked (GlcNAc...) asparagine glycosylation occurs at N269. The chain crosses the membrane as a helical span at residues 281–301 (PANTLASFNSCLNPILYVFLG). Residues 302-323 (QEFRDRLIYSLYASLERALRED) lie on the Cytoplasmic side of the membrane.

This sequence belongs to the G-protein coupled receptor 1 family. As to expression, expressed in 0.6 % of a subset of sensory neurons located in the apical layer of the vomeronasal organ. Each neuron appears to express only one receptor gene.

It localises to the cell membrane. In terms of biological role, may have an olfactory function associated with the identification of pathogens or of pathogenic states. The polypeptide is Formyl peptide receptor-related sequence 4 (Fpr-rs4) (Mus musculus (Mouse)).